Here is a 63-residue protein sequence, read N- to C-terminus: MPIAQLYILEGRSDEQKETLIREVSEAMSRSLDAPIERVRVIITEMPKNHFGIGGEPASKLNR.

Residue Pro2 is the Proton acceptor; via imino nitrogen of the active site.

It belongs to the 4-oxalocrotonate tautomerase family. As to quaternary structure, homohexamer.

It catalyses the reaction (2Z,4E)-2-hydroxyhexa-2,4-dienedioate = (3E)-2-oxohex-3-enedioate. Its pathway is aromatic compound metabolism; salicylate degradation. Functionally, catalyzes the ketonization of 2-hydroxymuconate stereoselectively to yield 2-oxo-3-hexenedioate. The chain is 2-hydroxymuconate tautomerase (nahJ) from Pseudomonas putida (Arthrobacter siderocapsulatus).